Here is a 289-residue protein sequence, read N- to C-terminus: 4-diphosphocytidyl-2-C-methyl-D-erythritol kinase (289 aa).

Residue K10 is part of the active site. Residue 94–104 (PVAAGLAGGSS) coordinates ATP. Residue D136 is part of the active site.

Belongs to the GHMP kinase family. IspE subfamily.

It catalyses the reaction 4-CDP-2-C-methyl-D-erythritol + ATP = 4-CDP-2-C-methyl-D-erythritol 2-phosphate + ADP + H(+). It functions in the pathway isoprenoid biosynthesis; isopentenyl diphosphate biosynthesis via DXP pathway; isopentenyl diphosphate from 1-deoxy-D-xylulose 5-phosphate: step 3/6. In terms of biological role, catalyzes the phosphorylation of the position 2 hydroxy group of 4-diphosphocytidyl-2C-methyl-D-erythritol. In Bacillus anthracis (strain CDC 684 / NRRL 3495), this protein is 4-diphosphocytidyl-2-C-methyl-D-erythritol kinase.